A 329-amino-acid polypeptide reads, in one-letter code: Putative glycosyltransferase CsbB (329 aa).

The next 2 helical transmembrane spans lie at 231–251 (CFYT…ATFV) and 264–284 (FTII…LGII).

This sequence belongs to the glycosyltransferase 2 family. GtrB subfamily.

The protein resides in the cell membrane. This Bacillus subtilis (strain 168) protein is Putative glycosyltransferase CsbB (csbB).